Consider the following 346-residue polypeptide: N-acetyl-gamma-glutamyl-phosphate reductase (346 aa).

The active site involves C150.

The protein belongs to the NAGSA dehydrogenase family. Type 1 subfamily.

It is found in the cytoplasm. The catalysed reaction is N-acetyl-L-glutamate 5-semialdehyde + phosphate + NADP(+) = N-acetyl-L-glutamyl 5-phosphate + NADPH + H(+). It functions in the pathway amino-acid biosynthesis; L-arginine biosynthesis; N(2)-acetyl-L-ornithine from L-glutamate: step 3/4. In terms of biological role, catalyzes the NADPH-dependent reduction of N-acetyl-5-glutamyl phosphate to yield N-acetyl-L-glutamate 5-semialdehyde. This chain is N-acetyl-gamma-glutamyl-phosphate reductase, found in Alkaliphilus metalliredigens (strain QYMF).